The sequence spans 569 residues: Amyloid-beta A4 precursor protein-binding family A member 3 (569 aa).

Methionine 1 carries the post-translational modification N-acetylmethionine. 2 disordered regions span residues 1 to 53 (MEFL…MELD) and 124 to 168 (AQSV…SSPE). The span at 19-32 (EEPKGPEVPSEDHP) shows a compositional bias: basic and acidic residues. Residues 132–141 (AQAAPRLLQP) are compositionally biased toward low complexity. Phosphoserine is present on residues serine 166 and serine 367. One can recognise a PID domain in the interval 212–376 (DGVLFGAKYL…SASASHPHNG (165 aa)). 2 PDZ domains span residues 389 to 475 (EVCI…IIHC) and 480 to 554 (TAVI…TMPA).

In terms of assembly, binds to the cytoplasmic domain of amyloid protein (APP). Interacts with HIF1AN (via N-terminus). Interacts with NECAB3; seems to mediate the interaction between NECAB3 and HIF1AN. Ubiquitous.

Its subcellular location is the cytoplasm. It is found in the perinuclear region. Its function is as follows. May modulate processing of the amyloid-beta precursor protein (APP) and hence formation of APP-beta. May enhance the activity of HIF1A in macrophages by inhibiting the activity of HIF1AN. This Rattus norvegicus (Rat) protein is Amyloid-beta A4 precursor protein-binding family A member 3 (Apba3).